We begin with the raw amino-acid sequence, 291 residues long: Methylsterol monooxygenase 1-3 (291 aa).

A run of 3 helical transmembrane segments spans residues 41–61, 92–112, and 114–134; these read TILVLFLVFSLAPFPLVIVEW, FLLVVGTLQIVSYPSIQMVGI, and SGLPLPSLMEIVAQLVVYFLI. The Fatty acid hydroxylase domain occupies 128-263; that stretch reads LVVYFLIEDY…FTYCDYIYGT (136 aa). Positions 143–147 match the Histidine box-1 motif; it reads HRWMH. The Histidine box-2 motif lies at 156–160; that stretch reads HRIHH. A helical membrane pass occupies residues 178–198; it reads ILILGIPTFLGPAIAPGHIMT. The short motif at 235-241 is the Histidine box-3 element; it reads YHDYHHY.

It belongs to the sterol desaturase family. Interacts with ACBP1. Fe cation is required as a cofactor. In terms of tissue distribution, expressed at low levels in leaves, roots, siliques and flowers.

It localises to the endoplasmic reticulum membrane. It carries out the reaction 4,4-dimethyl-5alpha-cholest-7-en-3beta-ol + 6 Fe(II)-[cytochrome b5] + 3 O2 + 5 H(+) = 4alpha-carboxy-4beta-methyl-5alpha-cholest-7-ene-3beta-ol + 6 Fe(III)-[cytochrome b5] + 4 H2O. The catalysed reaction is 24-methylidenelophenol + 6 Fe(II)-[cytochrome b5] + 3 O2 + 5 H(+) = 4alpha-carboxy-ergosta-7,24(24(1))-dien-3beta-ol + 6 Fe(III)-[cytochrome b5] + 4 H2O. Non-heme iron oxygenase involved in sterols biosynthesis by catalyzing the removal of the first methyl group at the C-4 position. 4,4-dimethyl-9-beta,19-cyclopropylsterols such as 24-methylenecycloartanol are the preferred substrates. The chain is Methylsterol monooxygenase 1-3 from Arabidopsis thaliana (Mouse-ear cress).